A 214-amino-acid chain; its full sequence is MTTLADLRINYSRASLDEADAAPDPFVQFDRWFKEALAAKLPEPNTMTVATVGADGRPSARILLIKAVDERGFVFFTNYESRKGHDLAANPHAALLFYWIELERQVRIEGRIEKTSTDESDRYFASRPLGSRIGAWASEQSTVIDSRATLEAREKEVAARYGENPPRPPHWGGYRLVPDAIEFWQGRPSRLHDRLLYTRDDAAATGWSISRLAP.

Substrate-binding positions include 8–11 (RINY) and Lys66. FMN-binding positions include 61-66 (RILLIK), 76-77 (FT), Arg82, Lys83, and Gln105. Substrate-binding residues include Tyr123, Arg127, and Ser131. FMN contacts are provided by residues 140–141 (QS) and Trp184. 190–192 (RLH) is a binding site for substrate. Arg194 lines the FMN pocket.

Belongs to the pyridoxamine 5'-phosphate oxidase family. Homodimer. The cofactor is FMN.

The catalysed reaction is pyridoxamine 5'-phosphate + O2 + H2O = pyridoxal 5'-phosphate + H2O2 + NH4(+). The enzyme catalyses pyridoxine 5'-phosphate + O2 = pyridoxal 5'-phosphate + H2O2. The protein operates within cofactor metabolism; pyridoxal 5'-phosphate salvage; pyridoxal 5'-phosphate from pyridoxamine 5'-phosphate: step 1/1. Its pathway is cofactor metabolism; pyridoxal 5'-phosphate salvage; pyridoxal 5'-phosphate from pyridoxine 5'-phosphate: step 1/1. Its function is as follows. Catalyzes the oxidation of either pyridoxine 5'-phosphate (PNP) or pyridoxamine 5'-phosphate (PMP) into pyridoxal 5'-phosphate (PLP). The chain is Pyridoxine/pyridoxamine 5'-phosphate oxidase from Burkholderia vietnamiensis (strain G4 / LMG 22486) (Burkholderia cepacia (strain R1808)).